Here is a 270-residue protein sequence, read N- to C-terminus: Putative hydro-lyase Noca_0093 (270 aa).

The protein belongs to the D-glutamate cyclase family.

This Nocardioides sp. (strain ATCC BAA-499 / JS614) protein is Putative hydro-lyase Noca_0093.